Consider the following 452-residue polypeptide: Phosphoglucosamine mutase (452 aa).

The active-site Phosphoserine intermediate is S104. Mg(2+) is bound by residues S104, D241, D243, and D245. The residue at position 104 (S104) is a Phosphoserine.

Belongs to the phosphohexose mutase family. The cofactor is Mg(2+). In terms of processing, activated by phosphorylation.

It carries out the reaction alpha-D-glucosamine 1-phosphate = D-glucosamine 6-phosphate. In terms of biological role, catalyzes the conversion of glucosamine-6-phosphate to glucosamine-1-phosphate. The polypeptide is Phosphoglucosamine mutase (Arthrobacter sp. (strain FB24)).